The chain runs to 264 residues: MQLTLFCFVCLLPGHLALPLSQEAGDVSAHQWEQAQNYLRKFYPHDSKTKKVNSLVDNLKEMQKFFGLPMTGKLSPYIMEIMQKPRCGVPDVAEYSLMPNSPKWHSRIVTYRIVSYTSDLPRIVVDQIVKKALRMWSMQIPLNFKRVSWGTADIIIGFARRDHGDSFPFDGPGNTLGHAFAPGPGLGGDAHFDKDEYWTDGEDAGVNFLFAATHEFGHSLGLSHSSVPGTVMYPTYQRDYSEDFSLTKDDIAGIQKLYGKRNTL.

An N-terminal signal peptide occupies residues 1–17 (MQLTLFCFVCLLPGHLA). The propeptide at 18–94 (LPLSQEAGDV…PRCGVPDVAE (77 aa)) is activation peptide. The Cysteine switch motif lies at 85–92 (PRCGVPDV). Cysteine 87 contacts Zn(2+). Position 153 (aspartate 153) interacts with Ca(2+). Residues histidine 163 and aspartate 165 each contribute to the Zn(2+) site. Aspartate 170, glycine 171, glycine 173, and threonine 175 together coordinate Ca(2+). A Zn(2+)-binding site is contributed by histidine 178. The Ca(2+) site is built by glycine 185, glycine 187, and aspartate 189. Residue histidine 191 coordinates Zn(2+). Residues aspartate 193 and glutamate 196 each coordinate Ca(2+). Histidine 214 contacts Zn(2+). Glutamate 215 is a catalytic residue. Zn(2+) contacts are provided by histidine 218 and histidine 224.

This sequence belongs to the peptidase M10A family. Ca(2+) is required as a cofactor. Zn(2+) serves as cofactor. As to expression, expressed in the intestinal epithelium (at protein level).

The protein localises to the secreted. It localises to the extracellular space. The protein resides in the extracellular matrix. It catalyses the reaction Cleavage of 14-Ala-|-Leu-15 and 16-Tyr-|-Leu-17 in B chain of insulin. No action on collagen types I, II, IV, V. Cleaves gelatin chain alpha2(I) &gt; alpha1(I).. Degrades casein, gelatins of types I, III, IV, and V, and fibronectin. Activates procollagenase. Its function is as follows. May play a role in tissue reorganization. This is Matrilysin (Mmp7) from Mus musculus (Mouse).